The sequence spans 129 residues: Small ribosomal subunit protein uS13 (129 aa).

Over residues 92-114 the composition is skewed to basic residues; the sequence is HKHNLPVRGQRTKTNARTRRGPR. The tract at residues 92-129 is disordered; the sequence is HKHNLPVRGQRTKTNARTRRGPRKTVAGRGQKRGATKK.

It belongs to the universal ribosomal protein uS13 family. In terms of assembly, part of the 30S ribosomal subunit. Forms a loose heterodimer with protein S19. Forms two bridges to the 50S subunit in the 70S ribosome.

Located at the top of the head of the 30S subunit, it contacts several helices of the 16S rRNA. In the 70S ribosome it contacts the 23S rRNA (bridge B1a) and protein L5 of the 50S subunit (bridge B1b), connecting the 2 subunits; these bridges are implicated in subunit movement. Contacts the tRNAs in the A and P-sites. This chain is Small ribosomal subunit protein uS13, found in Dehalococcoides mccartyi (strain ATCC BAA-2266 / KCTC 15142 / 195) (Dehalococcoides ethenogenes (strain 195)).